A 297-amino-acid polypeptide reads, in one-letter code: Thoeris protein ThsA (297 aa).

The next 2 membrane-spanning stretches (helical) occupy residues 32–52 (ALSI…FLDL) and 57–77 (RLII…VQFI).

The protein resides in the cell membrane. Its activity is regulated as follows. Activated by a signal molecule generated by ThsB. Functionally, probable membrane protein component of the Thoeris antiviral defense system, composed of ThsA and ThsB. Expression of ThsA and ThsB in B.subtilis (strain BEST7003) confers resistance to phages SBSphiC, SBSphiJ and SPO1. Activation by a signal generated by ThsB leads to phage resistance. This chain is Thoeris protein ThsA, found in Bacillus amyloliquefaciens (strain Y2) (Bacillus amyloliquefaciens subsp. plantarum (strain B9601-Y2)).